The chain runs to 281 residues: MSTTWFVGADWLAEHIDDPEIQIIDARMASPGQEDRNVAQEYLNGHIPGAVFFDIEALSDHTSPLPHMLPRPETFAVAMRELGVNQDKHLIVYDEGNLFSAPRAWWMLRTFGVEKVSILGGGLAGWQRDDLLLEEGAVELPEGEFNAAFNPEAVVKVTDVLLASHENTAQIIDARPAARFNAEVDEPRPGLRRGHIPGALNVPWTELVREGELKTTDELDAIFFGRGVSYDKPIIVSCGSGVTAAVVLLALATLDVPNVKLYDGAWSEWGARADLPVEPLK.

Rhodanese domains follow at residues 17–135 and 165–278; these read DDPE…LLEE and HENT…LPVE. Arg179 contributes to the substrate binding site. The active-site Cysteine persulfide intermediate is Cys238. A substrate specificity region spans residues 238 to 244; the sequence is CGSGVTA.

Its subcellular location is the cytoplasm. It carries out the reaction 2-oxo-3-sulfanylpropanoate + [thioredoxin]-dithiol = [thioredoxin]-disulfide + hydrogen sulfide + pyruvate + H(+). Catalyzes the transfer of sulfur from 3-mercaptopyruvate to a thiol-containing acceptor to form an intramolecular disulfide releasing hydrogen sulfide and pyruvate. The chain is 3-mercaptopyruvate sulfurtransferase (sseA) from Escherichia coli O157:H7.